A 199-amino-acid chain; its full sequence is Small ribosomal subunit protein eS6 (199 aa).

Residues 172-183 are compositionally biased toward basic and acidic residues; that stretch reads KEQREKRSESLA. The segment at 172-199 is disordered; it reads KEQREKRSESLAKKRSRLSAASKPSIAA.

The protein belongs to the eukaryotic ribosomal protein eS6 family. In terms of processing, ribosomal protein S6 is the major substrate of protein kinases in eukaryote ribosomes.

Its function is as follows. Component of the 40S small ribosomal subunit. Plays an important role in controlling cell growth and proliferation through the selective translation of particular classes of mRNA. The chain is Small ribosomal subunit protein eS6 (RPS6) from Nicotiana tabacum (Common tobacco).